A 74-amino-acid polypeptide reads, in one-letter code: ATP synthase subunit 9, mitochondrial (74 aa).

2 consecutive transmembrane segments (helical) span residues 16–36 (GLIGAGIGIGVVFGSLIIGVS) and 50–70 (ILGFAFSEATGLFALMMAFLL).

This sequence belongs to the ATPase C chain family. As to quaternary structure, F-type ATPases have 2 components, CF(1) - the catalytic core - and CF(0) - the membrane proton channel. CF(1) has five subunits: alpha(3), beta(3), gamma(1), delta(1), epsilon(1). CF(0) has three main subunits: a, b and c.

It is found in the mitochondrion inner membrane. In terms of biological role, mitochondrial membrane ATP synthase (F(1)F(0) ATP synthase or Complex V) produces ATP from ADP in the presence of a proton gradient across the membrane which is generated by electron transport complexes of the respiratory chain. F-type ATPases consist of two structural domains, F(1) - containing the extramembraneous catalytic core and F(0) - containing the membrane proton channel, linked together by a central stalk and a peripheral stalk. During catalysis, ATP synthesis in the catalytic domain of F(1) is coupled via a rotary mechanism of the central stalk subunits to proton translocation. Part of the complex F(0) domain. A homomeric c-ring of probably 10 subunits is part of the complex rotary element. In Neurospora crassa (strain ATCC 24698 / 74-OR23-1A / CBS 708.71 / DSM 1257 / FGSC 987), this protein is ATP synthase subunit 9, mitochondrial (atp-9).